Reading from the N-terminus, the 577-residue chain is Galectin-3-binding protein (577 aa).

The N-terminal stretch at 1-18 is a signal peptide; sequence MALLWLLSVFLLVPGTQG. Residues 24–124 form the SRCR domain; that stretch reads MRLVNGASAN…HEKDAGVVCS (101 aa). 3 disulfides stabilise this stretch: Cys-49–Cys-113, Cys-62–Cys-123, and Cys-93–Cys-103. An N-linked (GlcNAc...) asparagine glycan is attached at Asn-69. Asn-125 is a glycosylation site (N-linked (GlcNAc...) asparagine). The BTB domain occupies 153–221; sequence CDLFIQVTGQ…FYSRRIEVSM (69 aa). A BACK domain is found at 260 to 360; that stretch reads PLDLYAYARA…MLPQELFELQ (101 aa). 4 N-linked (GlcNAc...) asparagine glycosylation sites follow: Asn-362, Asn-398, Asn-543, and Asn-572.

In terms of assembly, homodimers and homomultimers. The multimers form ring-like structures with a diameter of 30-40 nm. Binds LGALS1 and LGALS3. Binds ITGB1, COL4A1, COL5A1, COL6A1, FN1 and NID. Interacts with PPIC (in vitro). The unglycosylated form interacts with PDE4DIP isoform 2/MMG8/SMYLE; this interaction may connect a pericentrosomal complex to the gamma-tubulin ring complex (gamma-TuRC) to promote microtubule assembly and acetylation. In terms of processing, N-glycosylated. In terms of tissue distribution, detected in embryo, liver, spleen, kidney, lung, heart, intestine, thymus and lymph node.

Its subcellular location is the secreted. It localises to the extracellular space. The protein localises to the extracellular matrix. In terms of biological role, promotes integrin-mediated cell adhesion. May stimulate host defense against viruses and tumor cells. The polypeptide is Galectin-3-binding protein (Lgals3bp) (Mus musculus (Mouse)).